A 530-amino-acid chain; its full sequence is Autoinducer-2 kinase (530 aa).

It belongs to the FGGY kinase family.

Its subcellular location is the cytoplasm. The enzyme catalyses (S)-4,5-dihydroxypentane-2,3-dione + ATP = (2S)-2-hydroxy-3,4-dioxopentyl phosphate + ADP + H(+). Functionally, catalyzes the phosphorylation of autoinducer-2 (AI-2) to phospho-AI-2, which subsequently inactivates the transcriptional regulator LsrR and leads to the transcription of the lsr operon. Phosphorylates the ring-open form of (S)-4,5-dihydroxypentane-2,3-dione (DPD), which is the precursor to all AI-2 signaling molecules, at the C5 position. The chain is Autoinducer-2 kinase from Salmonella paratyphi A (strain ATCC 9150 / SARB42).